A 1343-amino-acid chain; its full sequence is DNA-directed RNA polymerase subunit beta (1343 aa).

The protein belongs to the RNA polymerase beta chain family. The RNAP catalytic core consists of 2 alpha, 1 beta, 1 beta' and 1 omega subunit. When a sigma factor is associated with the core the holoenzyme is formed, which can initiate transcription.

It catalyses the reaction RNA(n) + a ribonucleoside 5'-triphosphate = RNA(n+1) + diphosphate. In terms of biological role, DNA-dependent RNA polymerase catalyzes the transcription of DNA into RNA using the four ribonucleoside triphosphates as substrates. The polypeptide is DNA-directed RNA polymerase subunit beta (Haemophilus influenzae (strain 86-028NP)).